Reading from the N-terminus, the 4377-residue chain is E3 ubiquitin-protein ligase HUWE1 (4377 aa).

2 positions are modified to phosphoserine: S648 and S649. Disordered stretches follow at residues 706-758 (KADG…VVGT), 978-1001 (DEKA…AGSM), and 1018-1038 (TLAP…KSKI). The segment covering 725 to 735 (ASSEDEEEEEV) has biased composition (acidic residues). Positions 737–756 (AMQSFNSAQQNETEPNQQVV) are enriched in polar residues. Position 740 is a phosphoserine (S740). S1084 carries the phosphoserine modification. Residues 1291 to 1302 (LSKEKEGSRGEE) show a composition bias toward basic and acidic residues. The tract at residues 1291–1320 (LSKEKEGSRGEEEAGQEEGGSRREPQVNQQ) is disordered. Residues 1316 to 1355 (QVNQQQLQQLMDMGFTREHAMEALLNTSTMEQATEYLLTH) form the UBA domain. S1368, S1370, S1382, and S1395 each carry phosphoserine. A UIM domain is found at 1370–1389 (SEEDQMMRAIAMSLGQDIPM). The segment at 1396-1415 (PEEVACRKEEEERKAREKQE) is disordered. One can recognise a WWE domain in the interval 1603–1680 (RAQMTKYLQS…ETGNRRPVML (78 aa)). The tract at residues 1690-1733 (KNSKSSNGQELEKTLEESKETDIKHKENKGNDIPLALESTNTEK) is disordered. Residues 1699 to 1719 (ELEKTLEESKETDIKHKENKG) show a composition bias toward basic and acidic residues. S1907 is modified (phosphoserine). 3 disordered regions span residues 2019 to 2065 (APAE…SKPL), 2262 to 2343 (SLFG…QEMQ), and 2355 to 2479 (LLER…ASPL). The span at 2022 to 2033 (ETSTTGTSQGEA) shows a compositional bias: polar residues. T2035 is modified (phosphothreonine). Positions 2037 to 2057 (EETREGKKDKEGDRTSEEGKQ) are enriched in basic and acidic residues. Low complexity-rich tracts occupy residues 2262-2271 (SLFGSKSASS) and 2278-2291 (DAQG…SHQQ). S2266 carries the post-translational modification Phosphoserine. An N6-acetyllysine modification is found at K2267. Composition is skewed to acidic residues over residues 2295–2306 (EPGEAEVQEEDH) and 2314–2325 (ADGDIMDGEAET). Residues S2362, S2365, and S2391 each carry the phosphoserine modification. The segment covering 2388–2398 (SNLSQASTLQA) has biased composition (polar residues). The span at 2408 to 2472 (DPEDEEEHTQ…SEMELDEDYP (65 aa)) shows a compositional bias: acidic residues. A phosphoserine mark is found at S2527, S2532, and S2535. Residue T2554 is modified to Phosphothreonine. Residues S2584, S2595, and S2619 each carry the phosphoserine modification. Over residues 2704–2716 (IIDKGKEDKENRD) the composition is skewed to basic and acidic residues. 3 disordered regions span residues 2704-2970 (IIDK…GVDP), 2991-3012 (IRPP…VGNP), and 3036-3059 (QQRA…MDPV). The segment covering 2717 to 2736 (QSAQCTVTKTNDSTEQNVSD) has biased composition (polar residues). The segment covering 2738–2756 (TPMPDSYPTTPSSTDAPTS) has biased composition (low complexity). Residue T2751 is modified to Phosphothreonine. Polar residues-rich tracts occupy residues 2818–2835 (AETT…TSLS), 2847–2864 (AVSS…SLAS), and 2877–2890 (AGSS…SSTP). Residues S2826, S2833, S2835, S2861, S2887, and S2888 each carry the phosphoserine modification. T2889 is modified (phosphothreonine). 2 stretches are compositionally biased toward low complexity: residues 2913 to 2932 (PPED…RDSA) and 2993 to 3007 (PPTR…SAPA). S2918 bears the Phosphoserine mark. Residues S3116, S3117, S3122, S3127, and S3135 each carry the phosphoserine modification. R3149 is modified (omega-N-methylarginine). Disordered stretches follow at residues 3243–3266 (PKLS…SHEN), 3352–3383 (TQQR…SSSS), 3405–3429 (GKNS…SLEA), 3471–3514 (SEVQ…TTPV), and 3539–3566 (TPTT…EGGS). The segment covering 3355–3369 (RTKETNCESDRERGS) has biased composition (basic and acidic residues). Positions 3370-3383 (KQACSPCSSQSSSS) are enriched in low complexity. Composition is skewed to low complexity over residues 3475–3503 (TNSS…ATAP) and 3539–3552 (TPTT…TSTT). Phosphoserine occurs at positions 3557, 3663, 3753, 3758, 3760, and 3761. Residues 3738 to 3759 (TRRANKKAKQTGRLGSSGLGSA) are disordered. The segment covering 3749-3759 (GRLGSSGLGSA) has biased composition (low complexity). Disordered stretches follow at residues 3782–3850 (EGQR…LPLL) and 3897–3951 (RESK…SSSL). The segment covering 3794–3803 (TSESSNQSET) has biased composition (polar residues). Phosphoserine is present on residues S3810, S3818, and S3830. Positions 3817 to 3828 (PSPSAQDTQSIV) are enriched in polar residues. T3833 bears the Phosphothreonine mark. Composition is skewed to basic and acidic residues over residues 3836 to 3845 (GEKEKEEKPP) and 3897 to 3918 (RESK…KDEP). A phosphoserine mark is found at S3909 and S3922. Residues 3919–3928 (PPLSPAPLTP) are compositionally biased toward pro residues. 2 positions are modified to phosphothreonine: T3927 and T3930. Over residues 3941 to 3951 (EPSSMHISSSL) the composition is skewed to polar residues. In terms of domain architecture, HECT spans 4041 to 4377 (SPEEMKNRLY…QECSEGFGLA (337 aa)). The residue at position 4274 (Y4274) is a Phosphotyrosine. C4344 functions as the Glycyl thioester intermediate in the catalytic mechanism.

It belongs to the UPL family. TOM1/PTR1 subfamily. Interacts with isoform p19ARF of CDKN2A which strongly inhibits HUWE1 ubiquitin ligase activity. Interacts with MYCN, POLB and CDC6. Interacts with PA2G4. Interacts with NR1D1. Interacts with AMBRA1. Interacts with HAPSTR1. Interacts with HAPSTR2. In hepatocytes, interacts with PAQR3; the interaction promotes PPARA poylubiquitination and STUB1-mediated degradation. In terms of processing, phosphorylated on tyrosine; phosphorylation is probably required for its ability to inhibit TP53 transactivation. Widely expressed.

The protein resides in the cytoplasm. It localises to the nucleus. Its subcellular location is the mitochondrion. It catalyses the reaction S-ubiquitinyl-[E2 ubiquitin-conjugating enzyme]-L-cysteine + [acceptor protein]-L-lysine = [E2 ubiquitin-conjugating enzyme]-L-cysteine + N(6)-ubiquitinyl-[acceptor protein]-L-lysine.. It functions in the pathway protein modification; protein ubiquitination. In terms of biological role, E3 ubiquitin-protein ligase which mediates ubiquitination and subsequent proteasomal degradation of target proteins. Regulates apoptosis by catalyzing the polyubiquitination and degradation of MCL1. Mediates monoubiquitination of DNA polymerase beta (POLB) at 'Lys-41', 'Lys-61' and 'Lys-81', thereby playing a role in base-excision repair. Also ubiquitinates the p53/TP53 tumor suppressor and core histones including H1, H2A, H2B, H3 and H4. Ubiquitinates MFN2 to negatively regulate mitochondrial fusion in response to decreased stearoylation of TFRC. Ubiquitination of MFN2 also takes place following induction of mitophagy; AMBRA1 acts as a cofactor for HUWE1-mediated ubiquitination. Regulates neural differentiation and proliferation by catalyzing the polyubiquitination and degradation of MYCN. May regulate abundance of CDC6 after DNA damage by polyubiquitinating and targeting CDC6 to degradation. Mediates polyubiquitination of PA2G4. Acts in concert with MYCBP2 to regulate the circadian clock gene expression by promoting the lithium-induced ubiquination and degradation of NR1D1. Binds to an upstream initiator-like sequence in the preprodynorphin gene. Mediates HAPSTR1 degradation, but is also a required cofactor in the pathway by which HAPSTR1 governs stress signaling. Acts as a regulator of the JNK and NF-kappa-B signaling pathways by mediating assembly of heterotypic 'Lys-63'-/'Lys-48'-linked branched ubiquitin chains that are then recognized by TAB2: HUWE1 mediates branching of 'Lys-48'-linked chains of substrates initially modified with 'Lys-63'-linked conjugates by TRAF6. 'Lys-63'-/'Lys-48'-linked branched ubiquitin chains protect 'Lys-63'-linkages from CYLD deubiquitination. Ubiquitinates PPARA in hepatocytes. The sequence is that of E3 ubiquitin-protein ligase HUWE1 (Huwe1) from Mus musculus (Mouse).